The chain runs to 350 residues: ATPase GET3 (350 aa).

K26–T33 lines the ATP pocket. D57 is a catalytic residue. ATP contacts are provided by E241 and N268. C281 and C284 together coordinate Zn(2+).

This sequence belongs to the arsA ATPase family. As to quaternary structure, homodimer. Component of the Golgi to ER traffic (GET) complex, which is composed of GET1, GET2 and GET3. Within the complex, GET1 and GET2 form a heterotetramer which is stabilized by phosphatidylinositol binding and which binds to the GET3 homodimer. Interacts with the chloride channel protein GEF1.

It is found in the cytoplasm. The protein localises to the endoplasmic reticulum. It localises to the golgi apparatus. ATPase required for the post-translational delivery of tail-anchored (TA) proteins to the endoplasmic reticulum. Recognizes and selectively binds the transmembrane domain of TA proteins in the cytosol. This complex then targets to the endoplasmic reticulum by membrane-bound receptors GET1 and GET2, where the tail-anchored protein is released for insertion. This process is regulated by ATP binding and hydrolysis. ATP binding drives the homodimer towards the closed dimer state, facilitating recognition of newly synthesized TA membrane proteins. ATP hydrolysis is required for insertion. Subsequently, the homodimer reverts towards the open dimer state, lowering its affinity for the GET1-GET2 receptor, and returning it to the cytosol to initiate a new round of targeting. Cooperates with the HDEL receptor ERD2 to mediate the ATP-dependent retrieval of resident ER proteins that contain a C-terminal H-D-E-L retention signal from the Golgi to the ER. Involved in low-level resistance to the oxyanions arsenite and arsenate, and in heat tolerance. The protein is ATPase GET3 of Candida glabrata (strain ATCC 2001 / BCRC 20586 / JCM 3761 / NBRC 0622 / NRRL Y-65 / CBS 138) (Yeast).